Here is a 246-residue protein sequence, read N- to C-terminus: Putative KilA-N domain-containing protein L33 (246 aa).

Residues 20-129 (RYTKCQYCDI…AKVSLWIEEW (110 aa)) enclose the KilA-N domain.

In Acanthamoeba polyphaga mimivirus (APMV), this protein is Putative KilA-N domain-containing protein L33.